Reading from the N-terminus, the 98-residue chain is NADH-ubiquinone oxidoreductase chain 4L (98 aa).

Helical transmembrane passes span M1–M21, S29–L49, and I61–V81.

The protein belongs to the complex I subunit 4L family. Core subunit of respiratory chain NADH dehydrogenase (Complex I) which is composed of 45 different subunits.

It localises to the mitochondrion inner membrane. The enzyme catalyses a ubiquinone + NADH + 5 H(+)(in) = a ubiquinol + NAD(+) + 4 H(+)(out). Its function is as follows. Core subunit of the mitochondrial membrane respiratory chain NADH dehydrogenase (Complex I) which catalyzes electron transfer from NADH through the respiratory chain, using ubiquinone as an electron acceptor. Part of the enzyme membrane arm which is embedded in the lipid bilayer and involved in proton translocation. This is NADH-ubiquinone oxidoreductase chain 4L (MT-ND4L) from Halichoerus grypus (Gray seal).